Here is a 600-residue protein sequence, read N- to C-terminus: MPEHILVAVAWPYANGPRHIGHVAGFGVPADIFARYHRLRGNHVLMISGTDEHGTPITLVADKEGTTPQAIADRYNKIIGDDLYNLGLSYDIFTRTTTANHYAVTQDIFRTLYERGYIIRQETLGAFSATTGRTLPDRYIEGTCPICGYDEARGDQCDNCGSQLDPTDLINPRSKVDGQPPVFKPTEHFFLDLPAFAEQLHAWIDRQTHWRPNVRNFSLNFLKELKPRAITRDLEWGVPIPLPEYVHRDDKKIYVWFDAVIGYLSASIEWARNSGQPDAWRTWWQNPAARHFYFMGKDNIVFHTVIWPAMLLGYGAGGDFGTDPSGTYQGVPLQLPYNVVSSEFLTMEGKKFSSSRGIVIYVNDFLSRYDADALRYFLTIAGPENQDTDFTWAEFVRRNNDELVATWGNLVNRTLTNVYKNFGSVPQPGPLTATDEQLIQEVNGGLETVGDLLATARFKAALSEAMRLAAQVNIYLSEQEPWKVIKSDRERAATIWYVALRCVDTLKIIFTPFLPFSSQRLHEYLGYDGYIAGPLSFRDVTEADGRVHRVLTGNYAEWVGRWQPSALPVGQALRQPQPLFKKLDEKVVDEELARMQSRAS.

The 'HIGH' region signature appears at 12–22; it reads PYANGPRHIGH. Zn(2+)-binding residues include Cys-144, Cys-147, Cys-157, and Cys-160. A 'KMSKS' region motif is present at residues 351–355; the sequence is KFSSS. Ser-354 contacts ATP.

This sequence belongs to the class-I aminoacyl-tRNA synthetase family. MetG type 1 subfamily. Monomer. Zn(2+) serves as cofactor.

It is found in the cytoplasm. The enzyme catalyses tRNA(Met) + L-methionine + ATP = L-methionyl-tRNA(Met) + AMP + diphosphate. Is required not only for elongation of protein synthesis but also for the initiation of all mRNA translation through initiator tRNA(fMet) aminoacylation. The chain is Methionine--tRNA ligase from Chloroflexus aurantiacus (strain ATCC 29364 / DSM 637 / Y-400-fl).